A 288-amino-acid polypeptide reads, in one-letter code: Protein sprouty homolog 3 (288 aa).

In terms of domain architecture, SPR spans 154–260; it reads KCVPCTAARP…GYDSLRRPGC (107 aa).

Belongs to the sprouty family. As to quaternary structure, interacts with TESK1. Interacts with USP11. Interacts with CAV1 (via C-terminus). In terms of tissue distribution, widely expressed; particularly in the fetal tissues. Expressed in the brain with expression the highest in Purkinje cells in the cerebellum (at protein level). Expressed in the myocardium of the heart.

It localises to the cytoplasm. Functionally, inhibits neurite branching, arbor length and neurite complexity. Inhibits EGF-mediated p42/44 ERK signaling. Negatively regulates the MAPK cascade, resulting in a reduction of extracellular matrix protein accumulation. May function as an antagonist of fibroblast growth factor (FGF) pathways and may negatively modulate respiratory organogenesis. This chain is Protein sprouty homolog 3, found in Homo sapiens (Human).